A 97-amino-acid polypeptide reads, in one-letter code: MALIERIGKALEPLMLVMGLISPLATMPQLYKLYVSHSEHALGLSLTTWLLYSFIALLWTIYGIYHKNPTIWVGNCLGFLMYVAMVVGIIAHTGGTY.

One can recognise a PQ-loop domain in the interval 4–70 (IERIGKALEP…IYGIYHKNPT (67 aa)). The next 3 membrane-spanning stretches (helical) occupy residues 15-35 (MLVM…KLYV), 44-65 (LSLT…YGIY), and 71-91 (IWVG…GIIA).

As to quaternary structure, homodimer.

Its subcellular location is the cell membrane. Functionally, the homodimer mediates transmembrane sugar transport down a concentration gradient. Transport is probably effected by rocking-type movements, where a cargo-binding cavity opens first on one and then on the other side of the membrane. This chain is Sugar transporter SemiSWEET, found in Vibrio sp. (strain N418).